A 321-amino-acid polypeptide reads, in one-letter code: Ubiquinone biosynthesis O-methyltransferase, mitochondrial (321 aa).

Residues Arg-102, Gly-135, Asp-157, and Leu-210 each coordinate S-adenosyl-L-methionine. Residues Glu-211, Glu-214, and His-215 each contribute to the Mg(2+) site.

This sequence belongs to the class I-like SAM-binding methyltransferase superfamily. UbiG/COQ3 family. As to quaternary structure, component of a multi-subunit COQ enzyme complex. Mg(2+) is required as a cofactor.

The protein resides in the mitochondrion inner membrane. It catalyses the reaction a 3,4-dihydroxy-5-(all-trans-polyprenyl)benzoate + S-adenosyl-L-methionine = a 4-hydroxy-3-methoxy-5-(all-trans-polyprenyl)benzoate + S-adenosyl-L-homocysteine + H(+). The catalysed reaction is a 3-demethylubiquinone + S-adenosyl-L-methionine = a ubiquinone + S-adenosyl-L-homocysteine. It carries out the reaction a 3-demethylubiquinol + S-adenosyl-L-methionine = a ubiquinol + S-adenosyl-L-homocysteine + H(+). Its pathway is cofactor biosynthesis; ubiquinone biosynthesis. Functionally, O-methyltransferase required for two non-consecutive steps during ubiquinone biosynthesis. Catalyzes the 2 O-methylation of 3,4-dihydroxy-5-(all-trans-polyprenyl)benzoic acid into 4-hydroxy-3-methoxy-5-(all-trans-polyprenyl)benzoic acid. Also catalyzes the last step of ubiquinone biosynthesis by mediating methylation of 3-demethylubiquinone into ubiquinone. Also able to mediate the methylation of 3-demethylubiquinol into ubiquinol. The chain is Ubiquinone biosynthesis O-methyltransferase, mitochondrial from Dictyostelium discoideum (Social amoeba).